A 248-amino-acid chain; its full sequence is MALLEICCYSMECALTAQQNGADRVELCAAPKEGGLTPSLGVLKSVRQRVTIPVHPIIRPRGGDFCYSDGEFAAILEDVRTVRELGFPGLVTGVLDVDGNVDMPRMEKIMAAAGPLAVTFHRAFDMCANPLNTLNNLAEFGVARVLTSGQKSDALQGLSKIMELIAHGDAPIIMAGAGVRAENLHHFLDAGVLEVHSSAGAWQASPMRYRNQGLSMSSDAHADEYSRYVVDGAAVAEMKGIIERHQAK.

Belongs to the CutC family. Homodimer.

It localises to the cytoplasm. In Escherichia coli O17:K52:H18 (strain UMN026 / ExPEC), this protein is PF03932 family protein CutC.